A 242-amino-acid chain; its full sequence is UPF0246 protein SPCG_1533 (242 aa).

It belongs to the UPF0246 family.

This Streptococcus pneumoniae (strain CGSP14) protein is UPF0246 protein SPCG_1533.